A 296-amino-acid polypeptide reads, in one-letter code: Protease HtpX homolog (296 aa).

2 consecutive transmembrane segments (helical) span residues 7-27 (TVLL…LVAG) and 29-49 (QGMI…YFFS). Residue histidine 131 coordinates Zn(2+). The active site involves glutamate 132. Histidine 135 contributes to the Zn(2+) binding site. A run of 2 helical transmembrane segments spans residues 141–161 (ILIS…ANMA) and 178–198 (IASI…ATLI). Glutamate 207 is a Zn(2+) binding site.

The protein belongs to the peptidase M48B family. Requires Zn(2+) as cofactor.

It localises to the cell inner membrane. This is Protease HtpX homolog from Sulfurihydrogenibium sp. (strain YO3AOP1).